The following is a 201-amino-acid chain: Guanylate kinase (201 aa).

Residues 10 to 195 form the Guanylate kinase-like domain; sequence GKIIILSGPS…CVEEVKNILK (186 aa). 17–24 contributes to the ATP binding site; the sequence is GPSGVGKG.

It belongs to the guanylate kinase family.

It is found in the cytoplasm. The enzyme catalyses GMP + ATP = GDP + ADP. Functionally, essential for recycling GMP and indirectly, cGMP. This Mycoplasma mobile (strain ATCC 43663 / 163K / NCTC 11711) (Mesomycoplasma mobile) protein is Guanylate kinase.